A 349-amino-acid chain; its full sequence is NAC domain-containing protein JA2 (349 aa).

The region spanning 14–163 is the NAC domain; sequence LPPGFRFYPT…EWVLCRIYKK (150 aa). A DNA-binding region spans residues 111 to 169; that stretch reads VGIKKALVFYVGKAPKGSKTNWIMHEYRLFESSRKNNGSSKLDEWVLCRIYKKNSSGPK. A disordered region spans residues 169 to 194; the sequence is KPLMSGLHSSNEYSHGSSTSSSSQFD. Over residues 177-191 the composition is skewed to low complexity; that stretch reads SSNEYSHGSSTSSSS.

As to expression, expressed in guard cells of the epidermis.

It localises to the nucleus. Transcription factor involved in abscisic acid-mediated stomatal closure. Regulates the expression of NCED1, a gene involved in the biosynthesis of abscisic acid (ABA). Required for the stomatal closure induced by the bacterial pathogen Pseudomonas syringae pv tomato DC3000, but not for stomatal reopening. In Solanum lycopersicum (Tomato), this protein is NAC domain-containing protein JA2.